The primary structure comprises 222 residues: PKHD-type hydroxylase Syncc9902_2001 (222 aa).

Residues 80–174 (RVHSILISRS…RLVCVGWIES (95 aa)) form the Fe2OG dioxygenase domain. The Fe cation site is built by H98, D100, and H155. R165 contacts 2-oxoglutarate.

Fe(2+) serves as cofactor. Requires L-ascorbate as cofactor.

The protein is PKHD-type hydroxylase Syncc9902_2001 of Synechococcus sp. (strain CC9902).